An 82-amino-acid chain; its full sequence is UPF0180 protein BT9727_1277 (82 aa).

Belongs to the UPF0180 family.

In Bacillus thuringiensis subsp. konkukian (strain 97-27), this protein is UPF0180 protein BT9727_1277.